The following is a 354-amino-acid chain: S-adenosylmethionine:tRNA ribosyltransferase-isomerase (354 aa).

It belongs to the QueA family. Monomer.

It is found in the cytoplasm. The catalysed reaction is 7-aminomethyl-7-carbaguanosine(34) in tRNA + S-adenosyl-L-methionine = epoxyqueuosine(34) in tRNA + adenine + L-methionine + 2 H(+). It participates in tRNA modification; tRNA-queuosine biosynthesis. Functionally, transfers and isomerizes the ribose moiety from AdoMet to the 7-aminomethyl group of 7-deazaguanine (preQ1-tRNA) to give epoxyqueuosine (oQ-tRNA). In Salmonella heidelberg (strain SL476), this protein is S-adenosylmethionine:tRNA ribosyltransferase-isomerase.